A 430-amino-acid polypeptide reads, in one-letter code: Transcription factor PIF4 (430 aa).

5 disordered regions span residues 42–71, 97–136, 160–183, 223–266, and 405–430; these read QTHREQTQTQKQDHHEEALRSSTFLEDQET, MDPLQRPTSETVKPKSSPEPPQVMVKPKACPDPPPQVMPP, TVGPSHCGSNPSQNDLDVSMSHDR, DRKR…NLSE, and SSPAGQQSQQPSSVPTKTTDGSRLDH. Residues 43–60 are compositionally biased toward basic and acidic residues; that stretch reads THREQTQTQKQDHHEEAL. The span at 61-71 shows a compositional bias: polar residues; it reads RSSTFLEDQET. The span at 126–136 shows a compositional bias: pro residues; the sequence is CPDPPPQVMPP. Positions 160-175 are enriched in polar residues; sequence TVGPSHCGSNPSQNDL. Low complexity predominate over residues 244-253; the sequence is NKSNQRSGSN. Basic and acidic residues predominate over residues 257-266; the sequence is RAAEVHNLSE. Residues 257–306 enclose the bHLH domain; the sequence is RAAEVHNLSERRRRDRINERMKALQELIPHCSKTDKASILDEAIDYLKSL. The segment covering 405–419 has biased composition (low complexity); the sequence is SSPAGQQSQQPSSVP.

Belongs to the bHLH protein family. Interacts preferentially with the Pfr form of phytochrome B (phyB). Binds DNA as a homodimer, but once bound to DNA, loses its capacity to interact with phyB. Interacts with APRR1/TOC1 and PIF3. Binds to RGL2 and RGA. Forms non-functional heterodimer with HFR1. Interacts with PHYB, CRY1 and CRY2 in the nucleus in response to low blue light (LBL). Interacts with FYPP1 and FYPP3. Associates to PTAC12/HMR/PAP5, which acts as a transcriptional coactivator to trigger the thermoresponsive growth-relevant genes and promote warm-temperature-dependent PIF4 accumulation. Interacts with MED14. In terms of tissue distribution, mainly expressed in leaves, stems and seedlings, and, to a lower extent, in fruits, flowers and roots.

Its subcellular location is the nucleus. Its function is as follows. Transcription factor acting negatively in the phytochrome B signaling pathway. May regulate the expression of a subset of genes involved in cell expansion by binding to the G-box motif. Activated by CRY1 and CRY2 in response to low blue light (LBL) by direct binding at chromatin on E-box variant 5'-CA[CT]GTG-3' to stimulate specific gene expression to adapt global physiology (e.g. hypocotyl elongation in low blue light). Element of a PIF4/HMR/MED14-dependent thermoresponsive process; collaboratively with its transcriptional coactivator PTAC12/HMR/PAP5, involved in the regulation of thermoresponsive growth-relevant genes (e.g. mainly involved in biosynthesis and signaling of the phytohormone auxin) leading to daytime warm temperature elicitation of MED14-dependent thermomorphogenesis (e.g. hypocotyl elongation). The polypeptide is Transcription factor PIF4 (Arabidopsis thaliana (Mouse-ear cress)).